The primary structure comprises 189 residues: Mediator of RNA polymerase II transcription subunit 30 (189 aa).

A coiled-coil region spans residues 138–178; the sequence is SPESEDEIEKLEEQALSLRMEIAKKNVHVKELIDKLRELIA.

It belongs to the plant Mediator complex subunit 30 family. As to quaternary structure, component of the Mediator complex.

The protein resides in the nucleus. Its function is as follows. Component of the Mediator complex, a coactivator involved in the regulated transcription of nearly all RNA polymerase II-dependent genes. Mediator functions as a bridge to convey information from gene-specific regulatory proteins to the basal RNA polymerase II transcription machinery. The Mediator complex, having a compact conformation in its free form, is recruited to promoters by direct interactions with regulatory proteins and serves for the assembly of a functional preinitiation complex with RNA polymerase II and the general transcription factors. The polypeptide is Mediator of RNA polymerase II transcription subunit 30 (MED30) (Arabidopsis thaliana (Mouse-ear cress)).